The following is a 310-amino-acid chain: N-acetyl-gamma-glutamyl-phosphate reductase (310 aa).

Residue C117 is part of the active site.

Belongs to the NAGSA dehydrogenase family. Type 2 subfamily.

Its subcellular location is the cytoplasm. It catalyses the reaction N-acetyl-L-glutamate 5-semialdehyde + phosphate + NADP(+) = N-acetyl-L-glutamyl 5-phosphate + NADPH + H(+). The protein operates within amino-acid biosynthesis; L-arginine biosynthesis; N(2)-acetyl-L-ornithine from L-glutamate: step 3/4. Functionally, catalyzes the NADPH-dependent reduction of N-acetyl-5-glutamyl phosphate to yield N-acetyl-L-glutamate 5-semialdehyde. The protein is N-acetyl-gamma-glutamyl-phosphate reductase of Rhizobium johnstonii (strain DSM 114642 / LMG 32736 / 3841) (Rhizobium leguminosarum bv. viciae).